A 208-amino-acid polypeptide reads, in one-letter code: ATP-dependent Clp protease proteolytic subunit 1 (208 aa).

Residue S108 is the Nucleophile of the active site. H133 is a catalytic residue.

This sequence belongs to the peptidase S14 family. Fourteen ClpP subunits assemble into 2 heptameric rings which stack back to back to give a disk-like structure with a central cavity, resembling the structure of eukaryotic proteasomes.

The protein resides in the cytoplasm. The enzyme catalyses Hydrolysis of proteins to small peptides in the presence of ATP and magnesium. alpha-casein is the usual test substrate. In the absence of ATP, only oligopeptides shorter than five residues are hydrolyzed (such as succinyl-Leu-Tyr-|-NHMec, and Leu-Tyr-Leu-|-Tyr-Trp, in which cleavage of the -Tyr-|-Leu- and -Tyr-|-Trp bonds also occurs).. In terms of biological role, cleaves peptides in various proteins in a process that requires ATP hydrolysis. Has a chymotrypsin-like activity. Plays a major role in the degradation of misfolded proteins. In Corynebacterium glutamicum (strain ATCC 13032 / DSM 20300 / JCM 1318 / BCRC 11384 / CCUG 27702 / LMG 3730 / NBRC 12168 / NCIMB 10025 / NRRL B-2784 / 534), this protein is ATP-dependent Clp protease proteolytic subunit 1.